The sequence spans 469 residues: Interstitial collagenase (469 aa).

The signal sequence occupies residues 1–19; sequence MHSFPPLLLLLFWGVVSHS. Positions 20 to 99 are cleaved as a propeptide — activation peptide; the sequence is FPATLETQEQ…PRCGVPDVAQ (80 aa). Phosphoserine is present on S57. A Cysteine switch motif is present at residues 90–97; it reads PRCGVPDV. Zn(2+) is bound at residue C92. The tract at residues 98–276 is metalloprotease; it reads AQFVLTEGNP…VQPIGPQTPK (179 aa). Residue N120 is glycosylated (N-linked (GlcNAc...) asparagine). 2 residues coordinate Ca(2+): D124 and D158. Residues H168 and D170 each contribute to the Zn(2+) site. D175, G176, G178, and N180 together coordinate Ca(2+). H183 serves as a coordination point for Zn(2+). The Ca(2+) site is built by G190, G192, and D194. H196 provides a ligand contact to Zn(2+). Ca(2+)-binding residues include D198, E199, and E201. Position 218 (H218) interacts with Zn(2+). E219 is an active-site residue. Zn(2+) is bound by residues H222 and H228. Position 274 is a phosphothreonine (T274). Hemopexin repeat units follow at residues 275-324, 325-371, 374-422, and 423-466; these read PKAC…WPQL, PNGL…FGFP, VKHI…FPGI, and GHKV…WFNC. A disulfide bond links C278 and C466. 2 residues coordinate Ca(2+): D285 and E329. Y360 carries the phosphotyrosine; by PKDCC modification. 2 residues coordinate Ca(2+): D378 and D427.

The protein belongs to the peptidase M10A family. In terms of assembly, (Microbial infection) Interacts with HIV-1 Tat. Requires Ca(2+) as cofactor. Zn(2+) is required as a cofactor. Post-translationally, undergoes autolytic cleavage to two major forms (22 kDa and 27 kDa). A minor form (25 kDa) is the glycosylated form of the 22 kDa form. The 27 kDa form has no activity while the 22/25 kDa form can act as activator for collagenase. Tyrosine phosphorylated in platelets by PKDCC/VLK.

Its subcellular location is the secreted. It localises to the extracellular space. It is found in the extracellular matrix. The enzyme catalyses Cleavage of the triple helix of collagen at about three-quarters of the length of the molecule from the N-terminus, at 775-Gly-|-Ile-776 in the alpha1(I) chain. Cleaves synthetic substrates and alpha-macroglobulins at bonds where P1' is a hydrophobic residue.. Can be activated without removal of the activation peptide. Functionally, cleaves collagens of types I, II, and III at one site in the helical domain. Also cleaves collagens of types VII and X. In case of HIV infection, interacts and cleaves the secreted viral Tat protein, leading to a decrease in neuronal Tat's mediated neurotoxicity. The sequence is that of Interstitial collagenase (MMP1) from Homo sapiens (Human).